Here is a 149-residue protein sequence, read N- to C-terminus: MADQLTEEQIAEFKEAFSLFDKDGDGSITTKELGTVMRSLGQNPTEAELQDMINEVDADGNGTIDFPEFLNLMARKMKDTDSEEELKEAFKVFDKDQNGYISAADWRHVMTNLGEKLTDEEVDEMIREADVDGDGQVNYEEFVKMMMAK.

At Ala2 the chain carries N-acetylalanine. EF-hand domains follow at residues 8 to 43 (EQIAEFKEAFSLFDKDGDGSITTKELGTVMRSLGQN), 44 to 79 (PTEAELQDMINEVDADGNGTIDFPEFLNLMARKMKD), 81 to 116 (DSEEELKEAFKVFDKDQNGYISAADWRHVMTNLGEK), and 117 to 149 (LTDEEVDEMIREADVDGDGQVNYEEFVKMMMAK). Ca(2+) is bound by residues Asp21, Asp23, Asp25, Ser27, Glu32, Asp57, Asp59, Asn61, Thr63, Glu68, Asp94, Asp96, Asn98, Tyr100, and Asp105. Lys116 is subject to N6,N6,N6-trimethyllysine. Positions 130, 132, 134, 136, and 141 each coordinate Ca(2+).

Belongs to the calmodulin family.

Functionally, calmodulin mediates the control of a large number of enzymes, ion channels and other proteins by Ca(2+). Among the enzymes to be stimulated by the calmodulin-Ca(2+) complex are a number of protein kinases and phosphatases. The protein is Calmodulin of Mougeotia scalaris (Green alga).